The primary structure comprises 545 residues: Chaperonin GroEL (545 aa).

Residues Thr-31–Pro-34, Asp-88–Thr-92, Gly-415, Asn-478–Ala-480, and Asp-494 each bind ATP.

The protein belongs to the chaperonin (HSP60) family. As to quaternary structure, forms a cylinder of 14 subunits composed of two heptameric rings stacked back-to-back. Interacts with the co-chaperonin GroES.

Its subcellular location is the cytoplasm. It catalyses the reaction ATP + H2O + a folded polypeptide = ADP + phosphate + an unfolded polypeptide.. Functionally, together with its co-chaperonin GroES, plays an essential role in assisting protein folding. The GroEL-GroES system forms a nano-cage that allows encapsulation of the non-native substrate proteins and provides a physical environment optimized to promote and accelerate protein folding. In Streptococcus pyogenes serotype M4 (strain MGAS10750), this protein is Chaperonin GroEL.